The chain runs to 248 residues: Adenosylcobinamide-GDP ribazoletransferase (248 aa).

Helical transmembrane passes span 32 to 52 (FPLVGLLLGLLQAALAWIGMV), 60 to 80 (ALLVLLSGVLLTRAIHADGLA), 103 to 123 (AVGSFGVIALILLFLFKWIAL), 134 to 154 (WIVSGIVLARFVQVVLASVMT), 170 to 190 (AGGWHVVVAALFSLLILVLVM), 195 to 215 (LPIVVALLATAVSGSLTGMLA), and 227 to 247 (LGASSEMTEALVWCSALLLLF).

This sequence belongs to the CobS family. Requires Mg(2+) as cofactor.

Its subcellular location is the cell inner membrane. It carries out the reaction alpha-ribazole + adenosylcob(III)inamide-GDP = adenosylcob(III)alamin + GMP + H(+). It catalyses the reaction alpha-ribazole 5'-phosphate + adenosylcob(III)inamide-GDP = adenosylcob(III)alamin 5'-phosphate + GMP + H(+). Its pathway is cofactor biosynthesis; adenosylcobalamin biosynthesis; adenosylcobalamin from cob(II)yrinate a,c-diamide: step 7/7. Its function is as follows. Joins adenosylcobinamide-GDP and alpha-ribazole to generate adenosylcobalamin (Ado-cobalamin). Also synthesizes adenosylcobalamin 5'-phosphate from adenosylcobinamide-GDP and alpha-ribazole 5'-phosphate. The chain is Adenosylcobinamide-GDP ribazoletransferase from Prosthecochloris aestuarii (strain DSM 271 / SK 413).